We begin with the raw amino-acid sequence, 390 residues long: ATP-sensitive inward rectifier potassium channel 11 (390 aa).

Residues 1-65 (MLSRKGIIPE…LQDVFTTLVD (65 aa)) are Cytoplasmic-facing. 2 residues coordinate ATP: Asn48 and Arg50. A helical membrane pass occupies residues 66-92 (LKWPHTLLIFTMSFLCSWLLFAMVWWL). Residues 93–116 (IAFAHGDLAPGEGTTVPCVTSIHS) lie on the Extracellular side of the membrane. A disulfide bridge links Cys110 with Cys142. The segment at residues 117-133 (FSSAFLFSIEVQVTIGF) is an intramembrane region (discontinuously helical; Pore-forming). The K(+) site is built by Thr130 and Phe133. A Selectivity filter motif is present at residues 130 to 135 (TIGFGG). Residues 134 to 142 (GGRMVTEEC) are Extracellular-facing. The chain crosses the membrane as a helical span at residues 143–171 (PLAILILIVQNIVGLMINAIMLGCIFMKT). At 172–390 (SQAHRRAETL…RFSISPDSLS (219 aa)) the chain is on the cytoplasmic side. Arg176 contributes to the a 1,2-diacyl-sn-glycero-3-phospho-(1D-myo-inositol-4,5-bisphosphate) binding site. Tyr330 contributes to the ATP binding site. Thr341 carries the phosphothreonine; by MAPK1 modification. Ser385 carries the phosphoserine; by MAPK1 modification.

It belongs to the inward rectifier-type potassium channel (TC 1.A.2.1) family. KCNJ11 subfamily. In terms of assembly, homotetramer; the homotetramer binds four ATP molecules (one ATP per subunit). Forms an heterooctamer with ABCC8/SUR1; one KCNJ11 homotetramer interacts with four ABCC8/SUR1 molecules. Interacts with ABCC9/SUR2. Post-translationally, phosphorylation by MAPK1 results in changes in channel gating that destabilize the closed states and reduce the ATP sensitivity.

It localises to the membrane. It catalyses the reaction K(+)(in) = K(+)(out). KATP channels are regulated by cytoplasmic ATP/ADP ratios; ATP inhibits the channel by closing the pore, while ADP activates the channel. Activated by phosphatidylinositol 4,5-biphosphate (PtdIns(4,5)P2). In terms of biological role, inward rectifier potassium channel that forms the pore of ATP-sensitive potassium channels (KATP), regulating potassium permeability as a function of cytoplasmic ATP and ADP concentrations in many different cells. Inward rectifier potassium channels are characterized by a greater tendency to allow potassium to flow into the cell rather than out of it. Their voltage dependence is regulated by the concentration of extracellular potassium; as external potassium is raised, the voltage range of the channel opening shifts to more positive voltages. The inward rectification is mainly due to the blockage of outward current by internal magnesium. Can be blocked by extracellular barium. In pancreatic cells, it forms KATP channels with ABCC8/SUR1. Can form cardiac and smooth muscle-type KATP channels with ABCC9. In Cavia porcellus (Guinea pig), this protein is ATP-sensitive inward rectifier potassium channel 11 (KCNJ11).